A 114-amino-acid chain; its full sequence is Large ribosomal subunit protein bL20c (114 aa).

The protein belongs to the bacterial ribosomal protein bL20 family.

The protein localises to the plastid. Its subcellular location is the cyanelle. Its function is as follows. Binds directly to 23S ribosomal RNA and is necessary for the in vitro assembly process of the 50S ribosomal subunit. It is not involved in the protein synthesizing functions of that subunit. In Cyanophora paradoxa, this protein is Large ribosomal subunit protein bL20c (rpl20).